Consider the following 554-residue polypeptide: Hydroxylamine reductase (554 aa).

4 residues coordinate [2Fe-2S] cluster: C3, C6, C18, and C25. Hybrid [4Fe-2O-2S] cluster-binding residues include H252, E276, C320, C408, C436, C461, E495, and K497. C408 bears the Cysteine persulfide mark.

Belongs to the HCP family. It depends on [2Fe-2S] cluster as a cofactor. Hybrid [4Fe-2O-2S] cluster serves as cofactor.

The protein resides in the cytoplasm. It catalyses the reaction A + NH4(+) + H2O = hydroxylamine + AH2 + H(+). Catalyzes the reduction of hydroxylamine to form NH(3) and H(2)O. In Shewanella sp. (strain MR-7), this protein is Hydroxylamine reductase.